The following is an 806-amino-acid chain: Lon protease (806 aa).

In terms of domain architecture, Lon N-terminal spans 14-207 (YPVLPLRDIV…KALGFMEGEI (194 aa)). ATP is bound at residue 359 to 366 (GPPGVGKT). The Lon proteolytic domain occupies 594–775 (DDQVGVVTGL…GEVIAHALLR (182 aa)). Active-site residues include Ser-681 and Lys-724. Positions 786–806 (SQPAALPSVDSQDEAGTSIAH) are disordered.

The protein belongs to the peptidase S16 family. Homohexamer. Organized in a ring with a central cavity.

Its subcellular location is the cytoplasm. The catalysed reaction is Hydrolysis of proteins in presence of ATP.. ATP-dependent serine protease that mediates the selective degradation of mutant and abnormal proteins as well as certain short-lived regulatory proteins. Required for cellular homeostasis and for survival from DNA damage and developmental changes induced by stress. Degrades polypeptides processively to yield small peptide fragments that are 5 to 10 amino acids long. Binds to DNA in a double-stranded, site-specific manner. In R.meliloti it is important for controlling the turnover of a constitutively expressed protein(s) that, when unregulated, disrupts normal nodule formation and normal growth. The protein is Lon protease of Rhizobium meliloti (strain 1021) (Ensifer meliloti).